The primary structure comprises 646 residues: Nucleoside triphosphatase I (646 aa).

The Helicase ATP-binding domain occupies 48-213; sequence FIGLKNLNSM…NNLIGLLRPN (166 aa). 61–68 is an ATP binding site; it reads WDTGMGKT. A DEXH box motif is present at residues 151 to 154; sequence DEVH. One can recognise a Helicase C-terminal domain in the interval 377-540; that stretch reads YIEACRIILN…KINVVFDLLK (164 aa). The segment at 466–532 is binding to the cap-specific mRNA (nucleoside-2'-O-)-methyltransferase; sequence DIIILDMPWN…DIIKDKQSKI (67 aa).

It belongs to the helicase family. NPH I subfamily. As to quaternary structure, monomer. Interacts (via C-terminus) with RAP94 (via N-terminus). Interacts with the cap-specific mRNA (nucleoside-2'-O-)-methyltransferase.

The protein resides in the virion. It carries out the reaction a ribonucleoside 5'-triphosphate + H2O = a ribonucleoside 5'-diphosphate + phosphate + H(+). DNA-dependent ATPase required for providing the needed energy to achieve the termination of early transcripts. Acts in concert with the RAP94 subunit of the virion RNA polymerase and the capping enzyme/VTF to catalyze release of UUUUUNU-containing nascent RNA from the elongation complex. NPH-I must bind ssDNA in order to exhibit ATPase activity. The protein is Nucleoside triphosphatase I (NPH1) of Heliothis armigera entomopoxvirus (HaEPV).